Consider the following 912-residue polypeptide: Coatomer subunit beta (912 aa).

HEAT repeat units lie at residues 59–96, 100–135, 136–172, 244–281, 300–337, 339–375, 397–434, 441–479, 550–575, and 576–612; these read PIPQ…THLG, SEMI…REAE, VLEP…HFDY, SERS…APTA, NVKM…PNID, CKKV…KEFD, EVLG…TYPS, KKLI…AMTS, LKAQ…TSKS, and AYER…YLKY.

As to quaternary structure, oligomeric complex that consists of at least the alpha, beta, beta', gamma, delta, epsilon and zeta subunits.

The protein resides in the cytoplasm. It is found in the golgi apparatus membrane. The protein localises to the cytoplasmic vesicle. It localises to the COPI-coated vesicle membrane. In terms of biological role, the coatomer is a cytosolic protein complex that binds to dilysine motifs and reversibly associates with Golgi non-clathrin-coated vesicles, which further mediate biosynthetic protein transport from the ER, via the Golgi up to the trans Golgi network. Coatomer complex is required for budding from Golgi membranes, and is essential for the retrograde Golgi-to-ER transport of dilysine-tagged proteins. In Dictyostelium discoideum (Social amoeba), this protein is Coatomer subunit beta (copb).